The chain runs to 430 residues: Adenylosuccinate synthetase (430 aa).

GTP-binding positions include 12 to 18 and 40 to 42; these read GDEGKGK and GHT. Residue aspartate 13 is the Proton acceptor of the active site. The Mg(2+) site is built by aspartate 13 and glycine 40. Residues 13-16, 38-41, threonine 128, arginine 142, glutamine 223, threonine 238, and arginine 302 each bind IMP; these read DEGK and NAGH. Histidine 41 serves as the catalytic Proton donor. 298–304 provides a ligand contact to substrate; the sequence is TTTGRPR. GTP is bound by residues arginine 304, 330 to 332, and 412 to 414; these read SID and SVG.

Belongs to the adenylosuccinate synthetase family. As to quaternary structure, homodimer. The cofactor is Mg(2+).

It is found in the cytoplasm. The catalysed reaction is IMP + L-aspartate + GTP = N(6)-(1,2-dicarboxyethyl)-AMP + GDP + phosphate + 2 H(+). Its pathway is purine metabolism; AMP biosynthesis via de novo pathway; AMP from IMP: step 1/2. In terms of biological role, plays an important role in the de novo pathway of purine nucleotide biosynthesis. Catalyzes the first committed step in the biosynthesis of AMP from IMP. This Streptococcus pyogenes serotype M3 (strain ATCC BAA-595 / MGAS315) protein is Adenylosuccinate synthetase.